Consider the following 65-residue polypeptide: Small ribosomal subunit protein eS17 (65 aa).

The protein belongs to the eukaryotic ribosomal protein eS17 family.

The sequence is that of Small ribosomal subunit protein eS17 from Archaeoglobus fulgidus (strain ATCC 49558 / DSM 4304 / JCM 9628 / NBRC 100126 / VC-16).